The chain runs to 187 residues: Ubiquinone biosynthesis protein COQ4 homolog, mitochondrial (187 aa).

Residues histidine 77, aspartate 78, histidine 81, and glutamate 93 each coordinate Zn(2+).

The protein belongs to the COQ4 family. Component of a multi-subunit COQ enzyme complex. Zn(2+) is required as a cofactor.

The protein localises to the mitochondrion inner membrane. The enzyme catalyses a 4-hydroxy-3-methoxy-5-(all-trans-polyprenyl)benzoate + H(+) = a 2-methoxy-6-(all-trans-polyprenyl)phenol + CO2. It participates in cofactor biosynthesis; ubiquinone biosynthesis. In terms of biological role, lyase that catalyzes the C1-decarboxylation of 4-hydroxy-3-methoxy-5-(all-trans-polyprenyl)benzoic acid into 2-methoxy-6-(all-trans-polyprenyl)phenol during ubiquinone biosynthesis. This Leishmania infantum protein is Ubiquinone biosynthesis protein COQ4 homolog, mitochondrial.